We begin with the raw amino-acid sequence, 290 residues long: Nucleotide-binding protein Clos_0574 (290 aa).

An ATP-binding site is contributed by 8–15 (GLSGAGKS). Residue 59–62 (DIRG) participates in GTP binding.

This sequence belongs to the RapZ-like family.

In terms of biological role, displays ATPase and GTPase activities. This is Nucleotide-binding protein Clos_0574 from Alkaliphilus oremlandii (strain OhILAs) (Clostridium oremlandii (strain OhILAs)).